A 514-amino-acid chain; its full sequence is 1-pyrroline-5-carboxylate dehydrogenase (514 aa).

Residues glutamate 286 and cysteine 320 contribute to the active site.

The protein belongs to the aldehyde dehydrogenase family. RocA subfamily.

It catalyses the reaction L-glutamate 5-semialdehyde + NAD(+) + H2O = L-glutamate + NADH + 2 H(+). It functions in the pathway amino-acid degradation; L-proline degradation into L-glutamate; L-glutamate from L-proline: step 2/2. The chain is 1-pyrroline-5-carboxylate dehydrogenase from Staphylococcus aureus (strain MW2).